Consider the following 89-residue polypeptide: DNA/RNA-binding protein Alba 2 (89 aa).

K12 carries the post-translational modification N6-acetyllysine.

The protein belongs to the histone-like Alba family. Acetylated. Acetylation at Lys-12 decreases DNA-binding affinity.

The protein resides in the cytoplasm. It is found in the chromosome. Functionally, binds double-stranded DNA tightly but without sequence specificity. Involved in DNA compaction. This chain is DNA/RNA-binding protein Alba 2, found in Saccharolobus shibatae (strain ATCC 51178 / DSM 5389 / JCM 8931 / NBRC 15437 / B12) (Sulfolobus shibatae).